The sequence spans 265 residues: Large ribosomal subunit protein eL8 (265 aa).

This sequence belongs to the eukaryotic ribosomal protein eL8 family. In terms of assembly, interacts with cmd-1 in the presence of Ca(2+).

The polypeptide is Large ribosomal subunit protein eL8 (Caenorhabditis elegans).